The primary structure comprises 96 residues: Glutamyl-tRNA(Gln) amidotransferase subunit C (96 aa).

It belongs to the GatC family. Heterotrimer of A, B and C subunits.

It catalyses the reaction L-glutamyl-tRNA(Gln) + L-glutamine + ATP + H2O = L-glutaminyl-tRNA(Gln) + L-glutamate + ADP + phosphate + H(+). The enzyme catalyses L-aspartyl-tRNA(Asn) + L-glutamine + ATP + H2O = L-asparaginyl-tRNA(Asn) + L-glutamate + ADP + phosphate + 2 H(+). In terms of biological role, allows the formation of correctly charged Asn-tRNA(Asn) or Gln-tRNA(Gln) through the transamidation of misacylated Asp-tRNA(Asn) or Glu-tRNA(Gln) in organisms which lack either or both of asparaginyl-tRNA or glutaminyl-tRNA synthetases. The reaction takes place in the presence of glutamine and ATP through an activated phospho-Asp-tRNA(Asn) or phospho-Glu-tRNA(Gln). This is Glutamyl-tRNA(Gln) amidotransferase subunit C from Neisseria meningitidis serogroup A / serotype 4A (strain DSM 15465 / Z2491).